The following is a 461-amino-acid chain: D-phenylhydantoinase (461 aa).

A divalent metal cation is bound by residues H59, H61, and K151. K151 bears the N6-carboxylysine mark. Residue Y156 participates in substrate binding. The a divalent metal cation site is built by H182 and H239. Residue S286 coordinates substrate. An a divalent metal cation-binding site is contributed by D313. Position 335 (N335) interacts with substrate.

The protein belongs to the metallo-dependent hydrolases superfamily. Hydantoinase/dihydropyrimidinase family. As to quaternary structure, homotetramer. It depends on a divalent metal cation as a cofactor. Carboxylation allows a single lysine to coordinate two divalent metal cations.

It carries out the reaction D-5-phenylhydantoin + H2O = N-carbamoyl-D-phenylglycine + H(+). Catalyzes the stereospecific hydrolysis of the cyclic amide bond of D-hydantoin derivatives with an aromatic side chains at the 5'-position. Has no activity on dihydropyrimidines. The physiological function is unknown. In Shigella boydii serotype 4 (strain Sb227), this protein is D-phenylhydantoinase.